The primary structure comprises 626 residues: Janus kinase and microtubule-interacting protein 1 (626 aa).

The segment at 1–365 (MSKKGRSKGE…KIKNLTRENV (365 aa)) is mediates association with microtubules. 2 coiled-coil regions span residues 19 to 254 (VQMA…REAE) and 284 to 413 (ERDV…DDLS). A mediates interaction with TYK2 and GABBR1 region spans residues 365 to 626 (VEMKEKLSAQ…ILFEPKLKFM (262 aa)). Residue Ser-382 is modified to Phosphoserine. The span at 452–461 (ETLSETSCNT) shows a compositional bias: polar residues. Residues 452-480 (ETLSETSCNTDRTDRAPATPEEDLDDTTT) are disordered. Thr-470 carries the post-translational modification Phosphothreonine. A coiled-coil region spans residues 490–604 (QLTREYQALQ…EFRVLELEVR (115 aa)).

Belongs to the JAKMIP family. As to quaternary structure, homodimer. Forms a complex with GABBR1 and KIF5B/kinesin-1. Interacts with JAK1 and TYK2. Post-translationally, phosphorylated.

Its subcellular location is the cytoplasm. The protein resides in the cytoskeleton. It localises to the membrane. Functionally, associates with microtubules and may play a role in the microtubule-dependent transport of the GABA-B receptor. May play a role in JAK1 signaling and regulate microtubule cytoskeleton rearrangements. This Bos taurus (Bovine) protein is Janus kinase and microtubule-interacting protein 1 (JAKMIP1).